The chain runs to 309 residues: Aurora kinase C (309 aa).

The tract at residues 1 to 33 is disordered; that stretch reads MSSPRAVVQLGKAQPAGEELATANQTAQQPSSP. A compositionally biased stretch (polar residues) spans 22–32; the sequence is TANQTAQQPSS. The 251-residue stretch at 43-293 folds into the Protein kinase domain; sequence FEIGRPLGKG…LAQILKHPWV (251 aa). Residues 49 to 57 and K72 each bind ATP; that span reads LGKGKFGNV. Residue D166 is the Proton acceptor of the active site. A Phosphothreonine; by PKA modification is found at T198. Positions 292–309 are interaction with BIRC5; sequence WVQAHSRRVLPPCAQMAS.

This sequence belongs to the protein kinase superfamily. Ser/Thr protein kinase family. Aurora subfamily. Component of the chromosomal passenger complex (CPC) composed of at least BIRC5/survivin, CDCA8/borealin, INCENP, AURKB or AURKC; predominantly independent AURKB- and AURKC-containing complexes exist; in the complex interacts directly with BIRC5/survivin and INCENP. Interacts with TACC1. Isoform 1 and isoform 2 are expressed in testis. Elevated expression levels were seen only in a subset of cancer cell lines such as Hep-G2, Huh-7 and HeLa. Expression is maximum at M phase.

It localises to the nucleus. It is found in the chromosome. The protein resides in the centromere. Its subcellular location is the cytoplasm. The protein localises to the cytoskeleton. It localises to the spindle. It catalyses the reaction L-seryl-[protein] + ATP = O-phospho-L-seryl-[protein] + ADP + H(+). It carries out the reaction L-threonyl-[protein] + ATP = O-phospho-L-threonyl-[protein] + ADP + H(+). Okadaic acid, an inhibitor of protein phosphatase 1 (PP1), protein phosphatase 2A (PP2A) and protein phosphatase 5 (PP5), increases AURKC activity. AURKC is also stabilized through its interaction with INCENP, which also acts as an activator. Functionally, serine/threonine-protein kinase component of the chromosomal passenger complex (CPC), a complex that acts as a key regulator of mitosis. The CPC complex has essential functions at the centromere in ensuring correct chromosome alignment and segregation and is required for chromatin-induced microtubule stabilization and spindle assembly. Also plays a role in meiosis and more particularly in spermatogenesis. Has redundant cellular functions with AURKB and can rescue an AURKB knockdown. Like AURKB, AURKC phosphorylates histone H3 at 'Ser-10' and 'Ser-28'. AURKC phosphorylates the CPC complex subunits BIRC5/survivin and INCENP leading to increased AURKC activity. Phosphorylates TACC1, another protein involved in cell division, at 'Ser-228'. The sequence is that of Aurora kinase C (AURKC) from Homo sapiens (Human).